Reading from the N-terminus, the 389-residue chain is Maintenance of mitochondrial morphology protein 1-1 (389 aa).

The Lumenal portion of the chain corresponds to methionine 1 to glycine 22. The chain crosses the membrane as a helical span at residues phenylalanine 23 to phenylalanine 43. The Cytoplasmic segment spans residues serine 44 to arginine 389. In terms of domain architecture, SMP-LTD spans glutamine 83–proline 278. 2 disordered regions span residues lysine 283–isoleucine 345 and phenylalanine 360–arginine 389. A compositionally biased stretch (polar residues) spans methionine 330–asparagine 341.

It belongs to the MMM1 family. As to quaternary structure, homodimer. Component of the ER-mitochondria encounter structure (ERMES) or MDM complex, composed of MMM1, MDM10, MDM12 and MDM34. An MMM1 homodimer associates with one molecule of MDM12 on each side in a pairwise head-to-tail manner, and the SMP-LTD domains of MMM1 and MDM12 generate a continuous hydrophobic tunnel for phospholipid trafficking.

The protein localises to the endoplasmic reticulum membrane. Its function is as follows. Component of the ERMES/MDM complex, which serves as a molecular tether to connect the endoplasmic reticulum (ER) and mitochondria. Components of this complex are involved in the control of mitochondrial shape and protein biogenesis, and function in nonvesicular lipid trafficking between the ER and mitochondria. The MDM12-MMM11 subcomplex functions in the major beta-barrel assembly pathway that is responsible for biogenesis of all outer membrane beta-barrel proteins, and acts in a late step after the SAM complex. The MDM10-MDM12-MMM1 subcomplex further acts in the TOM40-specific pathway after the action of the MDM12-MMM1 complex. Essential for establishing and maintaining the structure of mitochondria and maintenance of mtDNA nucleoids. The protein is Maintenance of mitochondrial morphology protein 1-1 of Yarrowia lipolytica (strain CLIB 122 / E 150) (Yeast).